The sequence spans 222 residues: Ras-related protein Rab11D (222 aa).

Residue 22–29 coordinates GTP; it reads GDSAVGKS. An Effector region motif is present at residues 44 to 52; sequence SKATIGVEF. GTP is bound by residues 70–74 and 128–131; these read DTAGQ and NKTD. S-geranylgeranyl cysteine attachment occurs at residues Cys219 and Cys220.

The protein belongs to the small GTPase superfamily. Rab family.

The protein resides in the cell membrane. This chain is Ras-related protein Rab11D (RAB11D), found in Nicotiana tabacum (Common tobacco).